Reading from the N-terminus, the 229-residue chain is MNNNIILQCINLTKSFYRKKEEIRTLNKISLKIRKGDITFITGKSGSGKSTLLHLLGGLDKPTSGSILFDGVSLHSMSSNEIAKLRNLKLGFIFQFHHLLLDFNVLENIAIPSLISKKSIQESKEKSYEILKKVHLEKKINKYPSELSGGERQRVAIARALVNQPSLVIADEPTSHLDKNNAKIIFDLIFELNSNLNTSFLIVSHDLRFIKKAPILLEMKNGQLFNNKN.

Residues 7 to 229 (LQCINLTKSF…KNGQLFNNKN (223 aa)) enclose the ABC transporter domain. Residue 43–50 (GKSGSGKS) participates in ATP binding.

Belongs to the ABC transporter superfamily. Lipoprotein translocase (TC 3.A.1.125) family. The complex is composed of two ATP-binding proteins (LolD) and two transmembrane proteins (LolC and LolE).

It is found in the cell inner membrane. Functionally, part of the ABC transporter complex LolCDE involved in the translocation of mature outer membrane-directed lipoproteins, from the inner membrane to the periplasmic chaperone, LolA. Responsible for the formation of the LolA-lipoprotein complex in an ATP-dependent manner. The sequence is that of Lipoprotein-releasing system ATP-binding protein LolD from Buchnera aphidicola subsp. Schizaphis graminum (strain Sg).